The chain runs to 185 residues: ATP synthase subunit delta (185 aa).

Belongs to the ATPase delta chain family. As to quaternary structure, F-type ATPases have 2 components, F(1) - the catalytic core - and F(0) - the membrane proton channel. F(1) has five subunits: alpha(3), beta(3), gamma(1), delta(1), epsilon(1). F(0) has three main subunits: a(1), b(2) and c(10-14). The alpha and beta chains form an alternating ring which encloses part of the gamma chain. F(1) is attached to F(0) by a central stalk formed by the gamma and epsilon chains, while a peripheral stalk is formed by the delta and b chains.

The protein resides in the cell inner membrane. Functionally, f(1)F(0) ATP synthase produces ATP from ADP in the presence of a proton or sodium gradient. F-type ATPases consist of two structural domains, F(1) containing the extramembraneous catalytic core and F(0) containing the membrane proton channel, linked together by a central stalk and a peripheral stalk. During catalysis, ATP synthesis in the catalytic domain of F(1) is coupled via a rotary mechanism of the central stalk subunits to proton translocation. This protein is part of the stalk that links CF(0) to CF(1). It either transmits conformational changes from CF(0) to CF(1) or is implicated in proton conduction. This Coxiella burnetii (strain CbuK_Q154) (Coxiella burnetii (strain Q154)) protein is ATP synthase subunit delta.